We begin with the raw amino-acid sequence, 1131 residues long: Activity-dependent neuroprotector homeobox protein 2 (1131 aa).

The C2H2-type 1 zinc-finger motif lies at 73-96 (YCCGLCKYSTKVLTSFKNHLHRYH). The C2H2-type 2; degenerate zinc-finger motif lies at 106–128 (IPCPNCVFASQPKVVGRHFRMFH). Residues K118 and K146 each participate in a glycyl lysine isopeptide (Lys-Gly) (interchain with G-Cter in SUMO2) cross-link. The C2H2-type 3; degenerate zinc finger occupies 155-178 (FTCLKCNFSNTLYYSMKKHVLVAH). The segment at 215-240 (YYCKKCNANASSQDALMYHILTSDIH) adopts a C2H2-type 4 zinc-finger fold. Positions 274-285 (LAAPANGSAPSA) are enriched in low complexity. A disordered region spans residues 274–329 (LAAPANGSAPSAPAQPPCFHLALPQNSPSPAAGQPVTVAQGAPGSLTHSPPAAGQS). Residues 694–716 (KTCPVCNELFPSNVYQVHMEVAH) form a C2H2-type 5; degenerate zinc finger. The C2H2-type 6; degenerate zinc finger occupies 747–768 (VRCLSCKCLVSEEELIHHLLMH). 2 consecutive C2H2-type zinc fingers follow at residues 770–793 (LGCL…RNRH) and 875–898 (STCP…KERH). The C2H2-type 9; degenerate zinc finger occupies 913 to 937 (FKCIHCCGVYTGNMTLAAIAVHLVR). Glycyl lysine isopeptide (Lys-Gly) (interchain with G-Cter in SUMO2) cross-links involve residues K979 and K1018. Phosphoserine is present on S1024. Residue K1032 forms a Glycyl lysine isopeptide (Lys-Gly) (interchain with G-Cter in SUMO1); alternate linkage. Residue K1032 forms a Glycyl lysine isopeptide (Lys-Gly) (interchain with G-Cter in SUMO2); alternate linkage. Positions 1043-1102 (PKKYEGRSYEEKKQFLKDYFHKKPYPSKKEIELLSSLFWVWKIDVASFFGKRRYICMKAI) form a DNA-binding region, homeobox.

Belongs to the krueppel C2H2-type zinc-finger protein family. May interact with SMARCA4/BRG1.

The protein localises to the nucleus. Its function is as follows. May be involved in transcriptional regulation. May play a role in neuronal function; perhaps involved in protection of brain tissues from oxidative stress. May be involved in erythroid differentiation. The protein is Activity-dependent neuroprotector homeobox protein 2 (ADNP2) of Homo sapiens (Human).